We begin with the raw amino-acid sequence, 827 residues long: Beta-galactosidase 2 (827 aa).

The first 24 residues, 1-24, serve as a signal peptide directing secretion; it reads MAASAVAVAFVVAVAAVLAAAASA. Glu182 serves as the catalytic Proton donor. Asn209 is a glycosylation site (N-linked (GlcNAc...) asparagine). Residue Glu251 is the Nucleophile of the active site. Asn458 is a glycosylation site (N-linked (GlcNAc...) asparagine). Positions 741–827 constitute an SUEL-type lectin domain; sequence DYEKAKVHLQ…KRAVVEAICG (87 aa).

It belongs to the glycosyl hydrolase 35 family.

It is found in the secreted. The protein localises to the extracellular space. Its subcellular location is the apoplast. The enzyme catalyses Hydrolysis of terminal non-reducing beta-D-galactose residues in beta-D-galactosides.. The chain is Beta-galactosidase 2 from Oryza sativa subsp. japonica (Rice).